The following is a 534-amino-acid chain: MEPAEDLQKVFDKAFAGMREAREAFAPSLAPREVGTITSIATGIAKVSGLPGVGFDELVKFPGDLFGIAFNVDEAEIGVVLLGEYWHLHAGDEVDRTGRVMDVAVGDGLLGRVIDPLGRPLDGRGPVASSHRLPIERPASPIMDRAPVTVPLQTGLKVIDALIPVGRGQRELILGDRQTGKTAIAIDTILNQQGQNVLCVYCAIGQRASAVAKVVATLREKGAMDFTTVVVTEGNDPPGLAYIAPYAATSIAEHFMEAGRDVLIVYDDLTQHARAYRELSLLLRRPPGREAFPGDIFYIHSRLLERATHLRQERGGGSLTALPIIETQAQNISAYIPTNLISITDGQIYLSPSLFELGVLPAVDVGKSVSRVGGKAQRTAYRAVAGDLKLAYAQFEELETFARFGARLDENTTKIIEHGRRIRACLKQPESAPVSVAAQIAVLLALSAELFDGVELNQMTEAEQAVRAAAADMPAEVRARFDSADKLSDEDREAIIQIARVALASFQPAPEPETAPKTKTDIKPKPKAAGGESS.

175 to 182 (GDRQTGKT) serves as a coordination point for ATP. The tract at residues 506 to 534 (FQPAPEPETAPKTKTDIKPKPKAAGGESS) is disordered. Residues 514–524 (TAPKTKTDIKP) show a composition bias toward basic and acidic residues.

Belongs to the ATPase alpha/beta chains family. In terms of assembly, F-type ATPases have 2 components, CF(1) - the catalytic core - and CF(0) - the membrane proton channel. CF(1) has five subunits: alpha(3), beta(3), gamma(1), delta(1), epsilon(1). CF(0) has three main subunits: a(1), b(2) and c(9-12). The alpha and beta chains form an alternating ring which encloses part of the gamma chain. CF(1) is attached to CF(0) by a central stalk formed by the gamma and epsilon chains, while a peripheral stalk is formed by the delta and b chains.

Its subcellular location is the cell inner membrane. It catalyses the reaction ATP + H2O + 4 H(+)(in) = ADP + phosphate + 5 H(+)(out). In terms of biological role, produces ATP from ADP in the presence of a proton gradient across the membrane. The alpha chain is a regulatory subunit. In Albidiferax ferrireducens (strain ATCC BAA-621 / DSM 15236 / T118) (Rhodoferax ferrireducens), this protein is ATP synthase subunit alpha 2.